Reading from the N-terminus, the 22-residue chain is Phospholipase A2 (22 aa).

Belongs to the phospholipase A2 family. Group II subfamily. Ca(2+) serves as cofactor. Seven disulfide bonds are present. In terms of tissue distribution, expressed by the venom gland.

Its subcellular location is the secreted. It catalyses the reaction a 1,2-diacyl-sn-glycero-3-phosphocholine + H2O = a 1-acyl-sn-glycero-3-phosphocholine + a fatty acid + H(+). Functionally, snake venom phospholipase A2 (PLA2) that inhibits neuromuscular transmission by blocking acetylcholine release from the nerve termini. PLA2 catalyzes the calcium-dependent hydrolysis of the 2-acyl groups in 3-sn-phosphoglycerides. This chain is Phospholipase A2, found in Daboia siamensis (Eastern Russel's viper).